The chain runs to 265 residues: NAD kinase 2 (265 aa).

Asn51 (proton acceptor) is an active-site residue. NAD(+) is bound by residues 122–123, Arg149, Asp151, 162–167, Ala186, and Asn226; these read NE and TAYNKS.

The protein belongs to the NAD kinase family. A divalent metal cation is required as a cofactor.

The protein resides in the cytoplasm. It carries out the reaction NAD(+) + ATP = ADP + NADP(+) + H(+). Functionally, involved in the regulation of the intracellular balance of NAD and NADP, and is a key enzyme in the biosynthesis of NADP. Catalyzes specifically the phosphorylation on 2'-hydroxyl of the adenosine moiety of NAD to yield NADP. This Halalkalibacterium halodurans (strain ATCC BAA-125 / DSM 18197 / FERM 7344 / JCM 9153 / C-125) (Bacillus halodurans) protein is NAD kinase 2.